A 294-amino-acid chain; its full sequence is Type I ribosome-inactivating protein trichoanguina (294 aa).

The N-terminal stretch at 1-19 (MALSFFFLAISLGSPTAIG) is a signal peptide. Residue N70 is glycosylated (N-linked (GlcNAc...) asparagine). Active-site residues include E177 and R180. N220 carries N-linked (GlcNAc...) asparagine glycosylation. A propeptide spanning residues 265-294 (VGSEYDIPTTILHPGAMGMLHNQNGNYVTM) is cleaved from the precursor.

It belongs to the ribosome-inactivating protein family. Type 1 RIP subfamily.

It catalyses the reaction Endohydrolysis of the N-glycosidic bond at one specific adenosine on the 28S rRNA.. Inhibits protein synthesis by depurinating 28S rRNA in ribosomes. In Trichosanthes anguina (Snake gourd), this protein is Type I ribosome-inactivating protein trichoanguina (TCA).